We begin with the raw amino-acid sequence, 158 residues long: Snaclec mucetin subunit alpha (158 aa).

Residues 1-23 (MGRFTFVSFGLLVVFLSLSGTGA) form the signal peptide. Disulfide bonds link Cys-27–Cys-38, Cys-55–Cys-152, and Cys-127–Cys-144. Residues 34 to 153 (YDRYCYQAFS…CGRENPFVCK (120 aa)) enclose the C-type lectin domain.

The protein belongs to the snaclec family. As to quaternary structure, dimer and tetramer of heterodimers of alpha and beta subunits ((alphabeta)(2) and (alphabeta)(4)); disulfide-linked. These two multimeric forms are found. In terms of processing, the complex is glycosylated. In terms of tissue distribution, expressed by the venom gland.

Its subcellular location is the secreted. Functionally, potent platelet activator that acts via GPIb (GP1BA/GP1BB). After activation by the toxin, the receptor is redistributed on platelet surface thanks to cytoskeletal translocation. The indirect activation of integrin alpha-IIb/beta-3 (ITGA2B/ITGB3) also induced by the toxin is downstream the cytoskeletal translocation of GPIb. The sequence is that of Snaclec mucetin subunit alpha from Protobothrops mucrosquamatus (Taiwan habu).